We begin with the raw amino-acid sequence, 356 residues long: NADH-quinone oxidoreductase subunit H (356 aa).

The next 8 helical transmembrane spans lie at 18–38, 87–107, 120–140, 166–186, 202–222, 257–277, 292–312, and 333–353; these read IVMV…IAYI, GVFL…WAVI, VGIL…IMGG, IGFV…SAIV, WLTF…VFYV, LFML…AILF, WVPG…LIAM, and FLPL…FAGI.

This sequence belongs to the complex I subunit 1 family. As to quaternary structure, NDH-1 is composed of 14 different subunits. Subunits NuoA, H, J, K, L, M, N constitute the membrane sector of the complex.

It is found in the cell inner membrane. The catalysed reaction is a quinone + NADH + 5 H(+)(in) = a quinol + NAD(+) + 4 H(+)(out). Functionally, NDH-1 shuttles electrons from NADH, via FMN and iron-sulfur (Fe-S) centers, to quinones in the respiratory chain. The immediate electron acceptor for the enzyme in this species is believed to be ubiquinone. Couples the redox reaction to proton translocation (for every two electrons transferred, four hydrogen ions are translocated across the cytoplasmic membrane), and thus conserves the redox energy in a proton gradient. This subunit may bind ubiquinone. In Nitrobacter winogradskyi (strain ATCC 25391 / DSM 10237 / CIP 104748 / NCIMB 11846 / Nb-255), this protein is NADH-quinone oxidoreductase subunit H.